Reading from the N-terminus, the 266-residue chain is Ribonuclease 3 (266 aa).

The region spanning 34-158 (IERCQEILGY…VIAALYIDGG (125 aa)) is the RNase III domain. E72 serves as a coordination point for Mg(2+). D76 is an active-site residue. 2 residues coordinate Mg(2+): D144 and E147. Residue E147 is part of the active site. One can recognise a DRBM domain in the interval 185–254 (NHKSVLQQFA…AANALAELHN (70 aa)).

This sequence belongs to the ribonuclease III family. Homodimer. Requires Mg(2+) as cofactor.

It localises to the cytoplasm. The catalysed reaction is Endonucleolytic cleavage to 5'-phosphomonoester.. Its function is as follows. Digests double-stranded RNA. Involved in the processing of primary rRNA transcript to yield the immediate precursors to the large and small rRNAs (23S and 16S). Processes some mRNAs, and tRNAs when they are encoded in the rRNA operon. Processes pre-crRNA and tracrRNA of type II CRISPR loci if present in the organism. The polypeptide is Ribonuclease 3 (Rhodopirellula baltica (strain DSM 10527 / NCIMB 13988 / SH1)).